Reading from the N-terminus, the 463-residue chain is Endoglucanase EG-1 (463 aa).

The N-terminal stretch at 1–22 (MAPSATLPLTTAILAIGRLVAA) is a signal peptide. The tract at residues 23 to 397 (QQPGTSTPEV…DIGSTTNSTG (375 aa)) is catalytic. Asparagine 78, asparagine 164, asparagine 204, and asparagine 208 each carry an N-linked (GlcNAc...) asparagine glycan. The active-site Nucleophile is the glutamate 218. Glutamate 223 acts as the Proton donor in catalysis. Residues 390–429 (GSTTNSTGGNPPPPPPPASSTTFSTTRRSSTTSSSPSCTQ) are disordered. The N-linked (GlcNAc...) asparagine glycan is linked to asparagine 394. The linker stretch occupies residues 402–427 (PPPPPASSTTFSTTRRSSTTSSSPSC). The segment covering 408–429 (SSTTFSTTRRSSTTSSSPSCTQ) has biased composition (low complexity). A CBM1 domain is found at 427–463 (CTQTHWGQCGGIGYTGCKTCTSGTTCQYGNDYYSQCL). Disulfide bonds link cysteine 435/cysteine 452 and cysteine 446/cysteine 462.

This sequence belongs to the glycosyl hydrolase 7 (cellulase C) family.

Its subcellular location is the secreted. The catalysed reaction is Endohydrolysis of (1-&gt;4)-beta-D-glucosidic linkages in cellulose, lichenin and cereal beta-D-glucans.. Functionally, the biological conversion of cellulose to glucose generally requires three types of hydrolytic enzymes: (1) Endoglucanases which cut internal beta-1,4-glucosidic bonds; (2) Exocellobiohydrolases that cut the disaccharide cellobiose from the non-reducing end of the cellulose polymer chain; (3) Beta-1,4-glucosidases which hydrolyze the cellobiose and other short cello-oligosaccharides to glucose. This chain is Endoglucanase EG-1 (egl1), found in Trichoderma longibrachiatum.